The following is a 156-amino-acid chain: 6,7-dimethyl-8-ribityllumazine synthase (156 aa).

5-amino-6-(D-ribitylamino)uracil-binding positions include Phe22, Ala57–Glu59, and Thr81–Ile83. A (2S)-2-hydroxy-3-oxobutyl phosphate-binding site is contributed by Gly86 to Thr87. His89 serves as the catalytic Proton donor. Phe114 contributes to the 5-amino-6-(D-ribitylamino)uracil binding site. Arg128 provides a ligand contact to (2S)-2-hydroxy-3-oxobutyl phosphate.

Belongs to the DMRL synthase family. As to quaternary structure, forms an icosahedral capsid composed of 60 subunits, arranged as a dodecamer of pentamers.

It carries out the reaction (2S)-2-hydroxy-3-oxobutyl phosphate + 5-amino-6-(D-ribitylamino)uracil = 6,7-dimethyl-8-(1-D-ribityl)lumazine + phosphate + 2 H2O + H(+). It participates in cofactor biosynthesis; riboflavin biosynthesis; riboflavin from 2-hydroxy-3-oxobutyl phosphate and 5-amino-6-(D-ribitylamino)uracil: step 1/2. In terms of biological role, catalyzes the formation of 6,7-dimethyl-8-ribityllumazine by condensation of 5-amino-6-(D-ribitylamino)uracil with 3,4-dihydroxy-2-butanone 4-phosphate. This is the penultimate step in the biosynthesis of riboflavin. This Photorhabdus laumondii subsp. laumondii (strain DSM 15139 / CIP 105565 / TT01) (Photorhabdus luminescens subsp. laumondii) protein is 6,7-dimethyl-8-ribityllumazine synthase.